The chain runs to 75 residues: UPF0352 protein VP2129 (75 aa).

This sequence belongs to the UPF0352 family.

The protein is UPF0352 protein VP2129 of Vibrio parahaemolyticus serotype O3:K6 (strain RIMD 2210633).